The sequence spans 248 residues: PF03932 family protein CutC (248 aa).

The protein belongs to the CutC family. As to quaternary structure, homodimer.

It localises to the cytoplasm. This is PF03932 family protein CutC from Escherichia coli O157:H7.